Here is a 234-residue protein sequence, read N- to C-terminus: Chalcone--flavanone isomerase 2 (234 aa).

The substrate site is built by T50, N115, and S192.

The protein belongs to the chalcone isomerase family.

It catalyses the reaction a chalcone = a flavanone.. The protein operates within secondary metabolite biosynthesis; flavonoid biosynthesis. Functionally, catalyzes the intramolecular cyclization of bicyclic chalcones into tricyclic (S)-flavanones. Responsible for the isomerization of 4,2',4',6'-tetrahydroxychalcone (also termed chalcone) into naringenin. The polypeptide is Chalcone--flavanone isomerase 2 (CHI2) (Vitis vinifera (Grape)).